Consider the following 359-residue polypeptide: Protein Wnt-9b (359 aa).

A signal peptide spans 1 to 23 (MRPAPALALAALCLLVLPAAAAA). 11 disulfides stabilise this stretch: cysteine 91-cysteine 102, cysteine 137-cysteine 145, cysteine 147-cysteine 164, cysteine 212-cysteine 226, cysteine 214-cysteine 221, cysteine 293-cysteine 318, cysteine 307-cysteine 313, cysteine 317-cysteine 357, cysteine 333-cysteine 348, cysteine 335-cysteine 345, and cysteine 340-cysteine 341. Asparagine 101 carries an N-linked (GlcNAc...) asparagine glycan. A lipid anchor (O-palmitoleoyl serine; by PORCN) is attached at serine 218.

This sequence belongs to the Wnt family. As to quaternary structure, forms a soluble 1:1 complex with AFM; this prevents oligomerization and is required for prolonged biological activity. The complex with AFM may represent the physiological form in body fluids. Component of the Wnt-Fzd-LRP5-LRP6 signaling complex that contains a WNT protein, a FZD protein and LRP5 or LRP6. Interacts directly in the complex with LRP6. Interacts with PKD1 (via extracellular domain). Palmitoleoylation is required for efficient binding to frizzled receptors. Depalmitoleoylation leads to Wnt signaling pathway inhibition.

Its subcellular location is the secreted. It localises to the extracellular space. The protein resides in the extracellular matrix. In terms of biological role, ligand for members of the frizzled family of seven transmembrane receptors. Functions in the canonical Wnt/beta-catenin signaling pathway. Required for normal embryonic kidney development, and for normal development of the urogenital tract, including uterus and part of the oviduct and the upper vagina in females, and epididymis and vas deferens in males. Activates a signaling cascade in the metanephric mesenchyme that induces tubulogenesis. Acts upstream of WNT4 in the signaling pathways that mediate development of kidney tubules and the Muellerian ducts. Plays a role in cranofacial development and is required for normal fusion of the palate during embryonic development. This Mus musculus (Mouse) protein is Protein Wnt-9b (Wnt9b).